Here is a 282-residue protein sequence, read N- to C-terminus: MSQIDDLPPLREVIRKYDLFARKSLGQNFLFDLNLTARIARAAGPLDDVTVIEIGPGPGGLTRALLATGAKRVIAVERDERAIPALEEIARRYPGRLEIIHGDATTFDPTPLLQGERARIVANLPYNIATLLLTGWLSVEPWPPWFDMMVLMFQREVAERIVATENDEAYGRLGVLANWRAETKILFDIAPGAFVPPPKVMSSVVRLAPRAAPLACSRRALEQVTAAAFNQRRKMLRQSLKALGVDPAALAEAAGVDPTRRAETVSIAGFVAMANRLIELKA.

S-adenosyl-L-methionine contacts are provided by Asn-28, Leu-30, Gly-55, Glu-77, Asp-103, and Asn-123.

The protein belongs to the class I-like SAM-binding methyltransferase superfamily. rRNA adenine N(6)-methyltransferase family. RsmA subfamily.

It is found in the cytoplasm. It catalyses the reaction adenosine(1518)/adenosine(1519) in 16S rRNA + 4 S-adenosyl-L-methionine = N(6)-dimethyladenosine(1518)/N(6)-dimethyladenosine(1519) in 16S rRNA + 4 S-adenosyl-L-homocysteine + 4 H(+). In terms of biological role, specifically dimethylates two adjacent adenosines (A1518 and A1519) in the loop of a conserved hairpin near the 3'-end of 16S rRNA in the 30S particle. May play a critical role in biogenesis of 30S subunits. The sequence is that of Ribosomal RNA small subunit methyltransferase A from Afipia carboxidovorans (strain ATCC 49405 / DSM 1227 / KCTC 32145 / OM5) (Oligotropha carboxidovorans).